The following is a 505-amino-acid chain: uncharacterized protein (505 aa).

The disordered stretch occupies residues 1–52; the sequence is MVDGSIHVPVQSHEGQHDNSSSLNEEIQTSQDPLGIVESYQESSTSDFDKSH. Positions 18-32 are enriched in polar residues; sequence DNSSSLNEEIQTSQD. The next 10 membrane-spanning stretches (helical) occupy residues 141–161, 173–193, 208–228, 235–255, 265–285, 290–310, 326–346, 362–382, 389–409, and 415–435; these read FWIVFFLGQVLSLCITATNTF, AFQTFLVYALLTLVYTPYTVF, GWKYIIFAFFDVEGNYFVVLA, LSASLLDSWATVAVVILSFIF, ILGVVACIGGLVLLVVSDVIS, SAVNPGLGDGYMIIGATCYGV, VVIGQLSLYGSIISIIQTFIF, GYLAGFILVMFLLYSLAPILF, FYNISLLTSDFWSLVIGIHVF, and WLYPIAFVLIILGLFVYHVFV. 3 positions are modified to phosphoserine: Ser-463, Ser-466, and Ser-467.

Belongs to the SLC35F solute transporter family.

The protein resides in the golgi apparatus membrane. This is an uncharacterized protein from Schizosaccharomyces pombe (strain 972 / ATCC 24843) (Fission yeast).